Reading from the N-terminus, the 480-residue chain is tRNA (guanine(37)-N(1))-methyltransferase (480 aa).

Residues H244, 292–293, 321–322, and N342 each bind S-adenosyl-L-methionine; these read DL and DG.

The protein belongs to the class I-like SAM-binding methyltransferase superfamily. TRM5/TYW2 family. As to quaternary structure, monomer.

It localises to the mitochondrion matrix. Its subcellular location is the nucleus. The protein resides in the cytoplasm. It catalyses the reaction guanosine(37) in tRNA + S-adenosyl-L-methionine = N(1)-methylguanosine(37) in tRNA + S-adenosyl-L-homocysteine + H(+). Specifically methylates the N1 position of guanosine-37 in various cytoplasmic and mitochondrial tRNAs. Methylation is not dependent on the nature of the nucleoside 5' of the target nucleoside. This is the first step in the biosynthesis of wybutosine (yW), a modified base adjacent to the anticodon of tRNAs and required for accurate decoding. The chain is tRNA (guanine(37)-N(1))-methyltransferase from Thalassiosira pseudonana (Marine diatom).